The following is a 327-amino-acid chain: Ferrochelatase 2 (327 aa).

Residues His-201 and Glu-282 each coordinate Fe cation.

This sequence belongs to the ferrochelatase family.

It is found in the cytoplasm. The enzyme catalyses heme b + 2 H(+) = protoporphyrin IX + Fe(2+). Its pathway is porphyrin-containing compound metabolism; protoheme biosynthesis; protoheme from protoporphyrin-IX: step 1/1. In terms of biological role, catalyzes the ferrous insertion into protoporphyrin IX. This Shewanella oneidensis (strain ATCC 700550 / JCM 31522 / CIP 106686 / LMG 19005 / NCIMB 14063 / MR-1) protein is Ferrochelatase 2.